The chain runs to 428 residues: D-amino acid dehydrogenase (428 aa).

3 to 17 contributes to the FAD binding site; that stretch reads VVVLGSGVVGVTSAY.

This sequence belongs to the DadA oxidoreductase family. FAD serves as cofactor.

The enzyme catalyses a D-alpha-amino acid + A + H2O = a 2-oxocarboxylate + AH2 + NH4(+). The protein operates within amino-acid degradation; D-alanine degradation; NH(3) and pyruvate from D-alanine: step 1/1. Oxidative deamination of D-amino acids. This is D-amino acid dehydrogenase from Paraburkholderia phytofirmans (strain DSM 17436 / LMG 22146 / PsJN) (Burkholderia phytofirmans).